Here is a 430-residue protein sequence, read N- to C-terminus: Adenylosuccinate synthetase (430 aa).

GTP-binding positions include 12–18 (GDEGKGK) and 40–42 (GHT). The active-site Proton acceptor is the Asp13. Mg(2+) contacts are provided by Asp13 and Gly40. IMP contacts are provided by residues 13–16 (DEGK), 38–41 (NAGH), Thr130, Arg144, Gln224, Thr239, and Arg303. His41 serves as the catalytic Proton donor. 299–305 (TVTGRKR) contributes to the substrate binding site. GTP contacts are provided by residues Arg305, 331-333 (KLD), and 413-415 (STS).

The protein belongs to the adenylosuccinate synthetase family. Homodimer. Mg(2+) serves as cofactor.

The protein localises to the cytoplasm. It carries out the reaction IMP + L-aspartate + GTP = N(6)-(1,2-dicarboxyethyl)-AMP + GDP + phosphate + 2 H(+). The protein operates within purine metabolism; AMP biosynthesis via de novo pathway; AMP from IMP: step 1/2. Functionally, plays an important role in the de novo pathway of purine nucleotide biosynthesis. Catalyzes the first committed step in the biosynthesis of AMP from IMP. The chain is Adenylosuccinate synthetase from Cereibacter sphaeroides (strain ATCC 17025 / ATH 2.4.3) (Rhodobacter sphaeroides).